Consider the following 67-residue polypeptide: Transcription elongation factor Spt4 (67 aa).

Residues C7, C10, C19, and C22 each contribute to the Zn(2+) site.

Belongs to the archaeal Spt4 family. As to quaternary structure, heterodimer composed of Spt4 and Spt5. Interacts with RNA polymerase (RNAP). The complex interacts with FttA.

Its subcellular location is the chromosome. In terms of biological role, the Stp4-Spt5 complex stimulates transcription elongation on both naked DNA and histone-bound DNA (chromatin), facilitating transcription through the histone barrier. Neither protein functions alone. The complex also stimulates the transcription termination activity of FttA, neither protein alone stimulates FttA-dependent termination. This is Transcription elongation factor Spt4 from Thermococcus kodakarensis (strain ATCC BAA-918 / JCM 12380 / KOD1) (Pyrococcus kodakaraensis (strain KOD1)).